A 430-amino-acid chain; its full sequence is Adenylosuccinate synthetase (430 aa).

Residues 12–18 (GDEGKGK) and 40–42 (GHT) each bind GTP. The active-site Proton acceptor is the aspartate 13. Residues aspartate 13 and glycine 40 each contribute to the Mg(2+) site. IMP is bound by residues 13 to 16 (DEGK), 38 to 41 (NAGH), threonine 128, arginine 142, glutamine 223, threonine 238, and arginine 302. Histidine 41 acts as the Proton donor in catalysis. Substrate is bound at residue 298 to 304 (TVTKRPR). GTP contacts are provided by residues arginine 304, 330 to 332 (CVD), and 412 to 414 (SVG).

It belongs to the adenylosuccinate synthetase family. In terms of assembly, homodimer. The cofactor is Mg(2+).

The protein localises to the cytoplasm. The catalysed reaction is IMP + L-aspartate + GTP = N(6)-(1,2-dicarboxyethyl)-AMP + GDP + phosphate + 2 H(+). The protein operates within purine metabolism; AMP biosynthesis via de novo pathway; AMP from IMP: step 1/2. Plays an important role in the de novo pathway of purine nucleotide biosynthesis. Catalyzes the first committed step in the biosynthesis of AMP from IMP. The polypeptide is Adenylosuccinate synthetase (Ligilactobacillus salivarius (strain UCC118) (Lactobacillus salivarius)).